Here is a 106-residue protein sequence, read N- to C-terminus: Urease subunit beta (106 aa).

The protein belongs to the urease beta subunit family. In terms of assembly, heterotrimer of UreA (gamma), UreB (beta) and UreC (alpha) subunits. Three heterotrimers associate to form the active enzyme.

It is found in the cytoplasm. The catalysed reaction is urea + 2 H2O + H(+) = hydrogencarbonate + 2 NH4(+). Its pathway is nitrogen metabolism; urea degradation; CO(2) and NH(3) from urea (urease route): step 1/1. The protein is Urease subunit beta of Acinetobacter baumannii (strain SDF).